A 155-amino-acid polypeptide reads, in one-letter code: UPF0178 protein TDE_2151 (155 aa).

It belongs to the UPF0178 family.

This is UPF0178 protein TDE_2151 from Treponema denticola (strain ATCC 35405 / DSM 14222 / CIP 103919 / JCM 8153 / KCTC 15104).